Reading from the N-terminus, the 457-residue chain is Cystathionine beta-lyase, chloroplastic (457 aa).

The N-terminal 51 residues, 1–51 (MFSRPFVTPVTIDLQVKSITAGNMWEGLGFYKPANSKSNQMICSKGFRLNC), are a transit peptide targeting the chloroplast. Pyridoxal 5'-phosphate contacts are provided by Y120, R122, G150, M151, S268, and T270. K271 is subject to N6-(pyridoxal phosphate)lysine.

Belongs to the trans-sulfuration enzymes family. In terms of assembly, forms homodimers. May form homotetramers from two homodimers. It depends on pyridoxal 5'-phosphate as a cofactor.

Its subcellular location is the plastid. It is found in the chloroplast. It carries out the reaction L,L-cystathionine + H2O = L-homocysteine + pyruvate + NH4(+). The catalysed reaction is an S-substituted L-cysteine + H2O = a thiol + pyruvate + NH4(+). Functionally, catalyzes the degradation of cystathionine. This Mimosa pudica (Sensitive plant) protein is Cystathionine beta-lyase, chloroplastic.